Consider the following 260-residue polypeptide: Adenosylcobinamide-GDP ribazoletransferase (260 aa).

Transmembrane regions (helical) follow at residues 40 to 60, 64 to 84, 117 to 137, 142 to 162, 188 to 208, and 210 to 230; these read AFPF…LLLL, TDPL…TGAL, YGAI…AAII, PLAA…AIAW, HFAL…PFGL, and PLVA…VFIR.

The protein belongs to the CobS family. The cofactor is Mg(2+).

The protein resides in the cell inner membrane. The enzyme catalyses alpha-ribazole + adenosylcob(III)inamide-GDP = adenosylcob(III)alamin + GMP + H(+). It catalyses the reaction alpha-ribazole 5'-phosphate + adenosylcob(III)inamide-GDP = adenosylcob(III)alamin 5'-phosphate + GMP + H(+). Its pathway is cofactor biosynthesis; adenosylcobalamin biosynthesis; adenosylcobalamin from cob(II)yrinate a,c-diamide: step 7/7. In terms of biological role, joins adenosylcobinamide-GDP and alpha-ribazole to generate adenosylcobalamin (Ado-cobalamin). Also synthesizes adenosylcobalamin 5'-phosphate from adenosylcobinamide-GDP and alpha-ribazole 5'-phosphate. The sequence is that of Adenosylcobinamide-GDP ribazoletransferase from Rhizobium etli (strain ATCC 51251 / DSM 11541 / JCM 21823 / NBRC 15573 / CFN 42).